Consider the following 130-residue polypeptide: DNA-binding protein HU (130 aa).

This sequence belongs to the bacterial histone-like protein family.

Its function is as follows. Histone-like DNA-binding protein which is capable of wrapping DNA to stabilize it, and thus to prevent its denaturation under extreme environmental conditions. The polypeptide is DNA-binding protein HU (hup) (Ureaplasma parvum serovar 3 (strain ATCC 700970)).